The primary structure comprises 415 residues: MQDLISQVEDLAGIEIDHTTSMVMIFGIIFLTAVVVHIILHWVVLRTFEKRAIASSRLWLQIITQNKLFHRLAFTLQGIIVNIQAVFWLQKGTEAADILTTCAQLWIMMYALLSVFSLLDVILNLAQKFPAASQLPLKGIFQGIKLIGAILVGILMISLLIGQSPAILISGLGAMAAVLMLVFKDPILGLVAGIQLSANDMLKLGDWLEMPKYGADGAVIDIGLTTVKVRNWDNTITTIPTWSLVSDSFKNWSGMSASGGRRIKRSISIDVTSIRFLDEDEMQRLNKAHLLKPYLTSRHQEINEWNRQQGSTESVLNLRRMTNIGTFRAYLNEYLRNHPRIRKDMTLMVRQLAPGDNGLPLEIYAFTNTVVWLEYESIQADIFDHIFAIVEEFGLRLHQSPTGNDIRSLAGAFKQ.

Residues 1-24 (MQDLISQVEDLAGIEIDHTTSMVM) lie on the Periplasmic side of the membrane. The helical transmembrane segment at 25-45 (IFGIIFLTAVVVHIILHWVVL) threads the bilayer. At 46–67 (RTFEKRAIASSRLWLQIITQNK) the chain is on the cytoplasmic side. A helical membrane pass occupies residues 68–88 (LFHRLAFTLQGIIVNIQAVFW). At 89–104 (LQKGTEAADILTTCAQ) the chain is on the periplasmic side. The chain crosses the membrane as a helical span at residues 105 to 125 (LWIMMYALLSVFSLLDVILNL). Topologically, residues 126 to 148 (AQKFPAASQLPLKGIFQGIKLIG) are cytoplasmic. The helical transmembrane segment at 149 to 169 (AILVGILMISLLIGQSPAILI) threads the bilayer. The Periplasmic segment spans residues 170 to 173 (SGLG). A helical transmembrane segment spans residues 174-194 (AMAAVLMLVFKDPILGLVAGI). The Cytoplasmic portion of the chain corresponds to 195–415 (QLSANDMLKL…IRSLAGAFKQ (221 aa)).

This sequence belongs to the MscS (TC 1.A.23) family. As to quaternary structure, homoheptamer.

It is found in the cell inner membrane. Functionally, functions as a component of a mechanosensing system that transmits signals triggered by external osmotic changes to intracellular factors. This chain is Mechanosensing system component YbdG (ybdG), found in Shigella flexneri.